A 352-amino-acid chain; its full sequence is MTQNDLMSELKQQALVDINEANDAQALQEVKVKYLGKKGSVSALMKNMKDLPNEEKPAYGQKVNELRQTIQSELDERQKLIKEEKLNQQLSEETIDVTLPSRHIEIGSKHPLTRTVEEIEDLFLGLGYEIVDGYEVEQDYYNFEALNLPKSHPARDMQDSFYITEEILMRTHTSPVQARTMEKRKGQGPVKIICPGKVYRRDSDDATHSHQFTQIEGLVVDKNIKMSDLKGTLELVAKKLFGADREIRLRPSYFPFTEPSVEVDVSCFKCKGQGCNVCKHTGWIEILGAGMVHPNVLEMAGFDSKEYSGFAFGMGPDRIAMLKYGIEDIRHFYTNDVRFLDQFKAVEDRGEQ.

Glutamate 258 serves as a coordination point for Mg(2+).

Belongs to the class-II aminoacyl-tRNA synthetase family. Phe-tRNA synthetase alpha subunit type 1 subfamily. As to quaternary structure, tetramer of two alpha and two beta subunits. Mg(2+) serves as cofactor.

Its subcellular location is the cytoplasm. The enzyme catalyses tRNA(Phe) + L-phenylalanine + ATP = L-phenylalanyl-tRNA(Phe) + AMP + diphosphate + H(+). The sequence is that of Phenylalanine--tRNA ligase alpha subunit from Staphylococcus epidermidis (strain ATCC 35984 / DSM 28319 / BCRC 17069 / CCUG 31568 / BM 3577 / RP62A).